Here is a 67-residue protein sequence, read N- to C-terminus: Large ribosomal subunit protein uL29 (67 aa).

Belongs to the universal ribosomal protein uL29 family.

In Exiguobacterium sibiricum (strain DSM 17290 / CCUG 55495 / CIP 109462 / JCM 13490 / 255-15), this protein is Large ribosomal subunit protein uL29.